The primary structure comprises 253 residues: Ubiquinone/menaquinone biosynthesis C-methyltransferase UbiE (253 aa).

Residues Thr-76, Asp-97, and 125-126 each bind S-adenosyl-L-methionine; that span reads NA.

It belongs to the class I-like SAM-binding methyltransferase superfamily. MenG/UbiE family.

The catalysed reaction is a 2-demethylmenaquinol + S-adenosyl-L-methionine = a menaquinol + S-adenosyl-L-homocysteine + H(+). It carries out the reaction a 2-methoxy-6-(all-trans-polyprenyl)benzene-1,4-diol + S-adenosyl-L-methionine = a 5-methoxy-2-methyl-3-(all-trans-polyprenyl)benzene-1,4-diol + S-adenosyl-L-homocysteine + H(+). Its pathway is quinol/quinone metabolism; menaquinone biosynthesis; menaquinol from 1,4-dihydroxy-2-naphthoate: step 2/2. The protein operates within cofactor biosynthesis; ubiquinone biosynthesis. In terms of biological role, methyltransferase required for the conversion of demethylmenaquinol (DMKH2) to menaquinol (MKH2) and the conversion of 2-polyprenyl-6-methoxy-1,4-benzoquinol (DDMQH2) to 2-polyprenyl-3-methyl-6-methoxy-1,4-benzoquinol (DMQH2). This Nitrobacter hamburgensis (strain DSM 10229 / NCIMB 13809 / X14) protein is Ubiquinone/menaquinone biosynthesis C-methyltransferase UbiE.